A 147-amino-acid polypeptide reads, in one-letter code: Cyanate hydratase (147 aa).

Active-site residues include Arg88, Glu91, and Ser114.

The protein belongs to the cyanase family.

The catalysed reaction is cyanate + hydrogencarbonate + 3 H(+) = NH4(+) + 2 CO2. Functionally, catalyzes the reaction of cyanate with bicarbonate to produce ammonia and carbon dioxide. This is Cyanate hydratase from Parasynechococcus marenigrum (strain WH8102).